A 426-amino-acid chain; its full sequence is Serine--tRNA ligase (426 aa).

230-232 is an L-serine binding site; that stretch reads TAE. Position 261–263 (261–263) interacts with ATP; sequence RSE. E284 contacts L-serine. 348–351 is a binding site for ATP; sequence EISS. Residue S384 participates in L-serine binding.

The protein belongs to the class-II aminoacyl-tRNA synthetase family. Type-1 seryl-tRNA synthetase subfamily. Homodimer. The tRNA molecule binds across the dimer.

The protein localises to the cytoplasm. The enzyme catalyses tRNA(Ser) + L-serine + ATP = L-seryl-tRNA(Ser) + AMP + diphosphate + H(+). It carries out the reaction tRNA(Sec) + L-serine + ATP = L-seryl-tRNA(Sec) + AMP + diphosphate + H(+). Its pathway is aminoacyl-tRNA biosynthesis; selenocysteinyl-tRNA(Sec) biosynthesis; L-seryl-tRNA(Sec) from L-serine and tRNA(Sec): step 1/1. Catalyzes the attachment of serine to tRNA(Ser). Is also able to aminoacylate tRNA(Sec) with serine, to form the misacylated tRNA L-seryl-tRNA(Sec), which will be further converted into selenocysteinyl-tRNA(Sec). This Erythrobacter litoralis (strain HTCC2594) protein is Serine--tRNA ligase.